Reading from the N-terminus, the 434-residue chain is Glutamate-1-semialdehyde 2,1-aminomutase 1 (434 aa).

Residue Lys270 is modified to N6-(pyridoxal phosphate)lysine.

This sequence belongs to the class-III pyridoxal-phosphate-dependent aminotransferase family. HemL subfamily. Homodimer. It depends on pyridoxal 5'-phosphate as a cofactor.

Its subcellular location is the cytoplasm. The enzyme catalyses (S)-4-amino-5-oxopentanoate = 5-aminolevulinate. It functions in the pathway porphyrin-containing compound metabolism; protoporphyrin-IX biosynthesis; 5-aminolevulinate from L-glutamyl-tRNA(Glu): step 2/2. This Bacillus thuringiensis subsp. konkukian (strain 97-27) protein is Glutamate-1-semialdehyde 2,1-aminomutase 1.